The following is a 626-amino-acid chain: Colicin-Ib (626 aa).

Polar residues predominate over residues 276–286; that stretch reads QQLTQQKNTPD. A disordered region spans residues 276 to 308; the sequence is QQLTQQKNTPDGKTIVSPEKFPGRSSTNHSIVV. Residues 588-612 form a helical membrane-spanning segment; it reads FSVMLGTPVGILGFAIIMAAVSALV.

Belongs to the channel forming colicin family.

It localises to the host membrane. In terms of biological role, this colicin is a channel-forming colicin. This class of transmembrane toxins depolarize the cytoplasmic membrane, leading to dissipation of cellular energy. Functionally, colicins are polypeptide toxins produced by and active against E.coli and closely related bacteria. The chain is Colicin-Ib (cib) from Escherichia coli.